Here is a 52-residue protein sequence, read N- to C-terminus: Alpha-1-antiproteinase 3 (52 aa).

Residues 1–20 are disordered; sequence EDLQGDAVPEEXATKDDNEH.

The protein belongs to the serpin family. Post-translationally, N-glycosylated; contains glycans with bi- and triantennary side chains. Plasma.

It localises to the secreted. In Equus caballus (Horse), this protein is Alpha-1-antiproteinase 3.